An 817-amino-acid chain; its full sequence is Cargo-transport protein YPP1 (817 aa).

This sequence belongs to the YPP1 family. In terms of assembly, interacts with ribosomes.

It is found in the cytoplasmic granule. It localises to the cell membrane. Its function is as follows. Involved in endocytosis. This chain is Cargo-transport protein YPP1 (YPP1), found in Saccharomyces cerevisiae (strain ATCC 204508 / S288c) (Baker's yeast).